Reading from the N-terminus, the 112-residue chain is Small ribosomal subunit protein uS17 (112 aa).

The protein belongs to the universal ribosomal protein uS17 family. As to quaternary structure, part of the 30S ribosomal subunit.

Its function is as follows. One of the primary rRNA binding proteins, it binds specifically to the 5'-end of 16S ribosomal RNA. The polypeptide is Small ribosomal subunit protein uS17 (Thermotoga neapolitana (strain ATCC 49049 / DSM 4359 / NBRC 107923 / NS-E)).